The chain runs to 429 residues: Serine hydroxymethyltransferase (429 aa).

Residues L130 and 134 to 136 each bind (6S)-5,6,7,8-tetrahydrofolate; that span reads GHL. K239 bears the N6-(pyridoxal phosphate)lysine mark.

The protein belongs to the SHMT family. In terms of assembly, homodimer. The cofactor is pyridoxal 5'-phosphate.

It localises to the cytoplasm. The catalysed reaction is (6R)-5,10-methylene-5,6,7,8-tetrahydrofolate + glycine + H2O = (6S)-5,6,7,8-tetrahydrofolate + L-serine. It participates in one-carbon metabolism; tetrahydrofolate interconversion. Its pathway is amino-acid biosynthesis; glycine biosynthesis; glycine from L-serine: step 1/1. Functionally, catalyzes the reversible interconversion of serine and glycine with tetrahydrofolate (THF) serving as the one-carbon carrier. This reaction serves as the major source of one-carbon groups required for the biosynthesis of purines, thymidylate, methionine, and other important biomolecules. Also exhibits THF-independent aldolase activity toward beta-hydroxyamino acids, producing glycine and aldehydes, via a retro-aldol mechanism. The chain is Serine hydroxymethyltransferase from Phenylobacterium zucineum (strain HLK1).